The sequence spans 362 residues: Phosphoserine aminotransferase (362 aa).

The L-glutamate site is built by serine 9 and arginine 42. Pyridoxal 5'-phosphate contacts are provided by residues 76–77 (GR), tryptophan 102, threonine 153, aspartate 174, and glutamine 197. Lysine 198 carries the N6-(pyridoxal phosphate)lysine modification. 239 to 240 (NT) contacts pyridoxal 5'-phosphate.

Belongs to the class-V pyridoxal-phosphate-dependent aminotransferase family. SerC subfamily. As to quaternary structure, homodimer. Requires pyridoxal 5'-phosphate as cofactor.

Its subcellular location is the cytoplasm. The catalysed reaction is O-phospho-L-serine + 2-oxoglutarate = 3-phosphooxypyruvate + L-glutamate. The enzyme catalyses 4-(phosphooxy)-L-threonine + 2-oxoglutarate = (R)-3-hydroxy-2-oxo-4-phosphooxybutanoate + L-glutamate. The protein operates within amino-acid biosynthesis; L-serine biosynthesis; L-serine from 3-phospho-D-glycerate: step 2/3. Its pathway is cofactor biosynthesis; pyridoxine 5'-phosphate biosynthesis; pyridoxine 5'-phosphate from D-erythrose 4-phosphate: step 3/5. Its function is as follows. Catalyzes the reversible conversion of 3-phosphohydroxypyruvate to phosphoserine and of 3-hydroxy-2-oxo-4-phosphonooxybutanoate to phosphohydroxythreonine. This chain is Phosphoserine aminotransferase, found in Enterobacter sp. (strain 638).